A 598-amino-acid chain; its full sequence is UvrABC system protein C (598 aa).

The GIY-YIG domain occupies Asp14 to Ile91. Residues Thr196–Val231 form the UVR domain.

Belongs to the UvrC family. In terms of assembly, interacts with UvrB in an incision complex.

It is found in the cytoplasm. Its function is as follows. The UvrABC repair system catalyzes the recognition and processing of DNA lesions. UvrC both incises the 5' and 3' sides of the lesion. The N-terminal half is responsible for the 3' incision and the C-terminal half is responsible for the 5' incision. The sequence is that of UvrABC system protein C from Enterococcus faecalis (strain ATCC 700802 / V583).